Consider the following 468-residue polypeptide: Protein C-ets-2 (468 aa).

The PNT domain occupies 85–170 (ATFSGFQKEQ…EHLEQMIKEN (86 aa)). Phosphoserine is present on residues serine 220 and serine 225. Residues 262–290 (VNLLNNNSGKPKDHDSPENGGDSFESSDS) form a disordered region. 3 positions are modified to phosphoserine: serine 294, serine 297, and serine 300. The ETS DNA-binding region spans 362–442 (IQLWQFLLEL…SGKRYVYRFV (81 aa)).

This sequence belongs to the ETS family. Post-translationally, phosphorylation by CDK10 at Ser-220 and Ser-225 creates a phosphodegron that targets ETS2 for proteasomal degradation.

The protein localises to the nucleus. In terms of biological role, transcription factor activating transcription. Binds specifically the GGA DNA motif in gene promoters and stimulates transcription of those genes. The polypeptide is Protein C-ets-2 (Ets2) (Mus musculus (Mouse)).